Consider the following 50-residue polypeptide: U3-ctenitoxin-Asp1a (50 aa).

Expressed by the venom gland.

It is found in the secreted. In terms of biological role, possible neurotoxin. This Ancylometes sp. (South American fishing spider) protein is U3-ctenitoxin-Asp1a.